The chain runs to 236 residues: Alpha-acetolactate decarboxylase (236 aa).

Belongs to the alpha-acetolactate decarboxylase family.

It carries out the reaction (2S)-2-acetolactate + H(+) = (R)-acetoin + CO2. The protein operates within polyol metabolism; (R,R)-butane-2,3-diol biosynthesis; (R,R)-butane-2,3-diol from pyruvate: step 2/3. Functionally, converts acetolactate into acetoin. The sequence is that of Alpha-acetolactate decarboxylase (aldB) from Lactococcus lactis subsp. lactis (strain IL1403) (Streptococcus lactis).